A 262-amino-acid chain; its full sequence is Hydroxyethylthiazole kinase (262 aa).

Substrate is bound at residue Met44. Arg118 and Thr166 together coordinate ATP. Residue Gly193 coordinates substrate.

It belongs to the Thz kinase family. Mg(2+) is required as a cofactor.

It carries out the reaction 5-(2-hydroxyethyl)-4-methylthiazole + ATP = 4-methyl-5-(2-phosphooxyethyl)-thiazole + ADP + H(+). Its pathway is cofactor biosynthesis; thiamine diphosphate biosynthesis; 4-methyl-5-(2-phosphoethyl)-thiazole from 5-(2-hydroxyethyl)-4-methylthiazole: step 1/1. In terms of biological role, catalyzes the phosphorylation of the hydroxyl group of 4-methyl-5-beta-hydroxyethylthiazole (THZ). The chain is Hydroxyethylthiazole kinase from Chlamydia caviae (strain ATCC VR-813 / DSM 19441 / 03DC25 / GPIC) (Chlamydophila caviae).